Here is a 396-residue protein sequence, read N- to C-terminus: NADH-quinone oxidoreductase subunit D (396 aa).

The protein belongs to the complex I 49 kDa subunit family. NDH-1 is composed of 14 different subunits. Subunits NuoB, C, D, E, F, and G constitute the peripheral sector of the complex.

It is found in the cell inner membrane. It carries out the reaction a quinone + NADH + 5 H(+)(in) = a quinol + NAD(+) + 4 H(+)(out). Functionally, NDH-1 shuttles electrons from NADH, via FMN and iron-sulfur (Fe-S) centers, to quinones in the respiratory chain. The immediate electron acceptor for the enzyme in this species is believed to be ubiquinone. Couples the redox reaction to proton translocation (for every two electrons transferred, four hydrogen ions are translocated across the cytoplasmic membrane), and thus conserves the redox energy in a proton gradient. This Methylobacterium radiotolerans (strain ATCC 27329 / DSM 1819 / JCM 2831 / NBRC 15690 / NCIMB 10815 / 0-1) protein is NADH-quinone oxidoreductase subunit D.